The primary structure comprises 179 residues: Auxin-responsive protein IAA15 (179 aa).

The EAR-like (transcriptional repression) motif lies at 21–25; that stretch reads LTLAL. The PB1 domain maps to 86–173; the sequence is RKYVKVALDG…SCKRMRLMKT (88 aa).

Belongs to the Aux/IAA family. In terms of assembly, homodimers and heterodimers.

It localises to the nucleus. In terms of biological role, aux/IAA proteins are short-lived transcriptional factors that function as repressors of early auxin response genes at low auxin concentrations. Repression is thought to result from the interaction with auxin response factors (ARFs), proteins that bind to the auxin-responsive promoter element (AuxRE). Formation of heterodimers with ARF proteins may alter their ability to modulate early auxin response genes expression. In Arabidopsis thaliana (Mouse-ear cress), this protein is Auxin-responsive protein IAA15 (IAA15).